The sequence spans 881 residues: Serine/threonine-protein kinase/endoribonuclease IRE1b (881 aa).

Positions 1 to 21 are cleaved as a signal peptide; the sequence is MRGSALLDLILFLLVSPLAHS. At 22 to 357 the chain is on the lumenal side; the sequence is FKGSEISKFY…KQAGFASKFS (336 aa). N-linked (GlcNAc...) asparagine glycosylation is present at asparagine 115. Residues 358-378 traverse the membrane as a helical segment; sequence GLIVLIFGFCVTMLSVCGLFF. The Cytoplasmic segment spans residues 379–881; it reads YRLRQSIRIK…FFKYSKTTVF (503 aa). The 286-residue stretch at 459–744 folds into the Protein kinase domain; it reads FVSNKEIAKG…AQDVMHHPLF (286 aa). Residues 465–473 and lysine 487 each bind ATP; that span reads IAKGSNGTV. Residues 481–502 are ATP selon article; that stretch reads GRLVAVKRLVQSHHDVAQKEIL. Aspartate 608 acts as the Proton acceptor in catalysis. A disordered region spans residues 642–661; the sequence is LTRNSTGLGSGSSGWQAPEQ. The KEN domain maps to 747-878; it reads SDMRLSFLRD…EEFFFKYSKT (132 aa).

This sequence belongs to the protein kinase superfamily. Ser/Thr protein kinase family. As to quaternary structure, homodimer; disulfide-linked. Dimer formation is driven by hydrophobic interactions within the N-terminal luminal domains and stabilized by disulfide bridges. Mg(2+) is required as a cofactor. Autophosphorylated. In terms of tissue distribution, ubiquitous. Detected in the apical meristem, at leaf margins where vascular bundles end, in the anthers before pollen is formed and in the ovules at a very early stage of development. There is no expression in more mature embryos. Also strongly expressed in the cotyledons immediately after germination but not later on.

It localises to the endoplasmic reticulum membrane. The enzyme catalyses L-seryl-[protein] + ATP = O-phospho-L-seryl-[protein] + ADP + H(+). It catalyses the reaction L-threonyl-[protein] + ATP = O-phospho-L-threonyl-[protein] + ADP + H(+). Its activity is regulated as follows. The kinase domain is activated by trans-autophosphorylation. Kinase activity is required for activation of the endoribonuclease domain. Its function is as follows. Senses unfolded proteins in the lumen of the endoplasmic reticulum via its N-terminal domain which leads to enzyme auto-activation. The active endoribonuclease domain splices bZIP60 mRNA to generate a new C-terminus, converting it into a potent unfolded-protein response transcriptional activator which then induces transcription of UPR target genes. Involved in organ growth regulation. Plays a role in plant immunity and abiotic stress responses. Required for ER stress-induced autophagy. The polypeptide is Serine/threonine-protein kinase/endoribonuclease IRE1b (IRE1B) (Arabidopsis thaliana (Mouse-ear cress)).